The following is a 359-amino-acid chain: 3-dehydroquinate synthase (359 aa).

NAD(+)-binding positions include 71–76 (DGEQHK), 105–109 (GVIGD), 129–130 (TT), K142, and K151. Zn(2+) contacts are provided by E184, H247, and H264.

The protein belongs to the sugar phosphate cyclases superfamily. Dehydroquinate synthase family. NAD(+) is required as a cofactor. Co(2+) serves as cofactor. Requires Zn(2+) as cofactor.

It is found in the cytoplasm. It carries out the reaction 7-phospho-2-dehydro-3-deoxy-D-arabino-heptonate = 3-dehydroquinate + phosphate. It participates in metabolic intermediate biosynthesis; chorismate biosynthesis; chorismate from D-erythrose 4-phosphate and phosphoenolpyruvate: step 2/7. Functionally, catalyzes the conversion of 3-deoxy-D-arabino-heptulosonate 7-phosphate (DAHP) to dehydroquinate (DHQ). This is 3-dehydroquinate synthase from Chromobacterium violaceum (strain ATCC 12472 / DSM 30191 / JCM 1249 / CCUG 213 / NBRC 12614 / NCIMB 9131 / NCTC 9757 / MK).